We begin with the raw amino-acid sequence, 307 residues long: UDP-3-O-acyl-N-acetylglucosamine deacetylase (307 aa).

Zn(2+) contacts are provided by histidine 78, histidine 241, and aspartate 245. Histidine 268 (proton donor) is an active-site residue.

The protein belongs to the LpxC family. Requires Zn(2+) as cofactor.

The enzyme catalyses a UDP-3-O-[(3R)-3-hydroxyacyl]-N-acetyl-alpha-D-glucosamine + H2O = a UDP-3-O-[(3R)-3-hydroxyacyl]-alpha-D-glucosamine + acetate. It participates in glycolipid biosynthesis; lipid IV(A) biosynthesis; lipid IV(A) from (3R)-3-hydroxytetradecanoyl-[acyl-carrier-protein] and UDP-N-acetyl-alpha-D-glucosamine: step 2/6. Catalyzes the hydrolysis of UDP-3-O-myristoyl-N-acetylglucosamine to form UDP-3-O-myristoylglucosamine and acetate, the committed step in lipid A biosynthesis. In Variovorax paradoxus (strain S110), this protein is UDP-3-O-acyl-N-acetylglucosamine deacetylase.